A 459-amino-acid chain; its full sequence is ATP-dependent protease ATPase subunit HslU (459 aa).

ATP contacts are provided by residues Val26, 68 to 73 (GVGKTE), Asp271, Glu337, and Arg409.

Belongs to the ClpX chaperone family. HslU subfamily. As to quaternary structure, a double ring-shaped homohexamer of HslV is capped on each side by a ring-shaped HslU homohexamer. The assembly of the HslU/HslV complex is dependent on binding of ATP.

The protein localises to the cytoplasm. Its function is as follows. ATPase subunit of a proteasome-like degradation complex; this subunit has chaperone activity. The binding of ATP and its subsequent hydrolysis by HslU are essential for unfolding of protein substrates subsequently hydrolyzed by HslV. HslU recognizes the N-terminal part of its protein substrates and unfolds these before they are guided to HslV for hydrolysis. This chain is ATP-dependent protease ATPase subunit HslU, found in Xylella fastidiosa (strain 9a5c).